The chain runs to 337 residues: tRNA N6-adenosine threonylcarbamoyltransferase (337 aa).

The Fe cation site is built by His111 and His115. Substrate contacts are provided by residues 134–138 (LVSGG), Asp167, Gly180, and Asn272. Asp300 contacts Fe cation.

Belongs to the KAE1 / TsaD family. It depends on Fe(2+) as a cofactor.

The protein resides in the cytoplasm. It catalyses the reaction L-threonylcarbamoyladenylate + adenosine(37) in tRNA = N(6)-L-threonylcarbamoyladenosine(37) in tRNA + AMP + H(+). Functionally, required for the formation of a threonylcarbamoyl group on adenosine at position 37 (t(6)A37) in tRNAs that read codons beginning with adenine. Is involved in the transfer of the threonylcarbamoyl moiety of threonylcarbamoyl-AMP (TC-AMP) to the N6 group of A37, together with TsaE and TsaB. TsaD likely plays a direct catalytic role in this reaction. The protein is tRNA N6-adenosine threonylcarbamoyltransferase of Shewanella woodyi (strain ATCC 51908 / MS32).